A 529-amino-acid chain; its full sequence is MEQEQKLLVSDSNGLTKKESLKNTITGDESKNNLKTVQFSNSKADKERASKWSRSDGPENYKDEDTKEILLTGSQGGKTERDDSYENDSNLGSQRNCTEKEEEQPNHWGWSPGDHTGPAGQQNPSFGDKPYKCSECWKSFSNSSHLRIHQRTHSGEKPYRCSECGKCFSNSSHLIQHLRTHTGEKPYQCGECGKSFSNTSHLIIHERTHTGEKPYKCPECAKSLSSSSHLIQHHRSHTGEKPYECPLCGKCFSHSYVLVEHQRTHTGEKPYKCPDCGKSFSQSSSLIRHQRTHTGEKPYKCPECGKGFGCNSTLIKHQRIHTGEKPYQCIECGKNFSRSSNLVTHQKMHTDDKTYQSSEYEESLSQNYSLIEECRIQPGEKPYKCCECGKSFGLSSHLIRHQRTHTGEKPYRCSECWKTFSQSSTLVIHQRTHTGEKPYKCPDCGECFSQSFNLIRHRRTHMGEKPYKCTDCEKCFSRSAYLSQHRKIHVGKSFESPEVEDFPHEWTWKNYSGEIALIPSFSVPSSSPS.

Residues 1–125 are disordered; it reads MEQEQKLLVS…TGPAGQQNPS (125 aa). Residue Lys-6 forms a Glycyl lysine isopeptide (Lys-Gly) (interchain with G-Cter in SUMO2) linkage. A compositionally biased stretch (polar residues) spans 22–42; the sequence is KNTITGDESKNNLKTVQFSNS. A compositionally biased stretch (basic and acidic residues) spans 43 to 68; the sequence is KADKERASKWSRSDGPENYKDEDTKE. Residues 87–96 are compositionally biased toward polar residues; the sequence is NDSNLGSQRN. 12 consecutive C2H2-type zinc fingers follow at residues 131-153, 159-181, 187-209, 215-237, 243-265, 271-293, 299-321, 327-349, 383-405, 411-433, 439-461, and 467-489; these read YKCS…QRTH, YRCS…LRTH, YQCG…ERTH, YKCP…HRSH, YECP…QRTH, YKCP…QRTH, YKCP…QRIH, YQCI…QKMH, YKCC…QRTH, YRCS…QRTH, YKCP…RRTH, and YKCT…RKIH.

Belongs to the krueppel C2H2-type zinc-finger protein family.

It is found in the nucleus. Functionally, may be involved in transcriptional regulation. The protein is Zinc finger protein 572 (ZNF572) of Bos taurus (Bovine).